We begin with the raw amino-acid sequence, 209 residues long: Cilia- and flagella-associated protein 418 (209 aa).

The interval 1–76 is required for interaction with FAM161A; the sequence is MAKDLDELLD…LINEIFEEPD (76 aa). Positions 24-58 are disordered; the sequence is LDLGERPKGDGGGGSHSGDRNGAQEKETLRSTETF. Residues 40 to 58 show a composition bias toward basic and acidic residues; sequence SGDRNGAQEKETLRSTETF.

In terms of assembly, interacts (via N-terminus) with FAM161A (via central region); the interaction is direct. Expressed in multiple tissues, including the brain, kidney, lung, spleen, heart, trachea and testis. Expressed in the retina (at protein level).

It is found in the cytoplasm. The protein resides in the photoreceptor inner segment. May be involved in photoreceptor outer segment disk morphogenesis. This Mus musculus (Mouse) protein is Cilia- and flagella-associated protein 418.